A 733-amino-acid chain; its full sequence is Catalase-peroxidase (733 aa).

Residues 1–24 (MTDDSTCPVTGGADKQVTGRGQSY) are disordered. The segment at residues 96–219 (WHSAGTYRTL…LAAVQMGLIY (124 aa)) is a cross-link (tryptophyl-tyrosyl-methioninium (Trp-Tyr) (with M-245)). H97 acts as the Proton acceptor in catalysis. Positions 219-245 (YVNPEGPNGKPDPVAAAKDIRETFARM) form a cross-link, tryptophyl-tyrosyl-methioninium (Tyr-Met) (with W-96). H260 is a binding site for heme b.

The protein belongs to the peroxidase family. Peroxidase/catalase subfamily. Homodimer or homotetramer. Heme b serves as cofactor. In terms of processing, formation of the three residue Trp-Tyr-Met cross-link is important for the catalase, but not the peroxidase activity of the enzyme.

The catalysed reaction is H2O2 + AH2 = A + 2 H2O. It catalyses the reaction 2 H2O2 = O2 + 2 H2O. Its function is as follows. Bifunctional enzyme with both catalase and broad-spectrum peroxidase activity. This is Catalase-peroxidase from Methanoregula boonei (strain DSM 21154 / JCM 14090 / 6A8).